The chain runs to 360 residues: Phospho-N-acetylmuramoyl-pentapeptide-transferase (360 aa).

10 helical membrane passes run 26 to 46 (AIVSLLTALFISLWMGPRMIA), 72 to 92 (PTMGGIMILTAITVSVLLWAY), 94 to 114 (SNPYVWCVLTVLIGYGIIGFV), 132 to 152 (WKYFWMSVIALGVAFALYLAG), 168 to 188 (VMPQLGLLYILLAYFVIVGTG), 199 to 219 (GLAIMPTVFVAAGFALVAWAT), 236 to 256 (AGELVIVCTAIVGAGLGFLWF), 263 to 283 (VFMGDVGSLALGGALGIIAVL), 288 to 308 (FLLVIMGGVFVVETLSVILQV), and 338 to 358 (VIVRFWIISLMLVLIGLATLK).

Belongs to the glycosyltransferase 4 family. MraY subfamily. Requires Mg(2+) as cofactor.

The protein resides in the cell inner membrane. The enzyme catalyses UDP-N-acetyl-alpha-D-muramoyl-L-alanyl-gamma-D-glutamyl-meso-2,6-diaminopimeloyl-D-alanyl-D-alanine + di-trans,octa-cis-undecaprenyl phosphate = di-trans,octa-cis-undecaprenyl diphospho-N-acetyl-alpha-D-muramoyl-L-alanyl-D-glutamyl-meso-2,6-diaminopimeloyl-D-alanyl-D-alanine + UMP. It functions in the pathway cell wall biogenesis; peptidoglycan biosynthesis. Its function is as follows. Catalyzes the initial step of the lipid cycle reactions in the biosynthesis of the cell wall peptidoglycan: transfers peptidoglycan precursor phospho-MurNAc-pentapeptide from UDP-MurNAc-pentapeptide onto the lipid carrier undecaprenyl phosphate, yielding undecaprenyl-pyrophosphoryl-MurNAc-pentapeptide, known as lipid I. In Klebsiella pneumoniae (strain 342), this protein is Phospho-N-acetylmuramoyl-pentapeptide-transferase.